The sequence spans 348 residues: Dual-specificity RNA methyltransferase RlmN (348 aa).

The active-site Proton acceptor is the Glu94. In terms of domain architecture, Radical SAM core spans 100 to 330 (GKHNWTACIS…TAIIRASRGR (231 aa)). Residues Cys107 and Cys336 are joined by a disulfide bond. Residues Cys114, Cys118, and Cys121 each coordinate [4Fe-4S] cluster. S-adenosyl-L-methionine is bound by residues 163–164 (GE), Ser195, 217–219 (SLN), and Asn293. Cys336 functions as the S-methylcysteine intermediate in the catalytic mechanism.

It belongs to the radical SAM superfamily. RlmN family. The cofactor is [4Fe-4S] cluster.

The protein resides in the cytoplasm. It catalyses the reaction adenosine(2503) in 23S rRNA + 2 reduced [2Fe-2S]-[ferredoxin] + 2 S-adenosyl-L-methionine = 2-methyladenosine(2503) in 23S rRNA + 5'-deoxyadenosine + L-methionine + 2 oxidized [2Fe-2S]-[ferredoxin] + S-adenosyl-L-homocysteine. The enzyme catalyses adenosine(37) in tRNA + 2 reduced [2Fe-2S]-[ferredoxin] + 2 S-adenosyl-L-methionine = 2-methyladenosine(37) in tRNA + 5'-deoxyadenosine + L-methionine + 2 oxidized [2Fe-2S]-[ferredoxin] + S-adenosyl-L-homocysteine. In terms of biological role, specifically methylates position 2 of adenine 2503 in 23S rRNA and position 2 of adenine 37 in tRNAs. m2A2503 modification seems to play a crucial role in the proofreading step occurring at the peptidyl transferase center and thus would serve to optimize ribosomal fidelity. The chain is Dual-specificity RNA methyltransferase RlmN from Syntrophus aciditrophicus (strain SB).